Consider the following 103-residue polypeptide: MAAISINVSTVKPLGDRVFVKVSPSEEKTAGGILLPDTAKEKPQLGEVVAVGPGKRNDDGSRSPIEVKVGDKVLYSKYAGTDIKLGGEDYVLLSEKDILAGVA.

The protein belongs to the GroES chaperonin family. As to quaternary structure, heptamer of 7 subunits arranged in a ring. Interacts with the chaperonin GroEL.

It is found in the cytoplasm. Its function is as follows. Together with the chaperonin GroEL, plays an essential role in assisting protein folding. The GroEL-GroES system forms a nano-cage that allows encapsulation of the non-native substrate proteins and provides a physical environment optimized to promote and accelerate protein folding. GroES binds to the apical surface of the GroEL ring, thereby capping the opening of the GroEL channel. In Gloeothece citriformis (strain PCC 7424) (Cyanothece sp. (strain PCC 7424)), this protein is Co-chaperonin GroES.